Consider the following 329-residue polypeptide: Formimidoylglutamase (329 aa).

Residues histidine 133, aspartate 159, histidine 161, aspartate 163, aspartate 253, and aspartate 255 each contribute to the Mn(2+) site.

The protein belongs to the arginase family. The cofactor is Mn(2+).

It carries out the reaction N-formimidoyl-L-glutamate + H2O = formamide + L-glutamate. The protein operates within amino-acid degradation; L-histidine degradation into L-glutamate; L-glutamate from N-formimidoyl-L-glutamate (hydrolase route): step 1/1. Functionally, catalyzes the conversion of N-formimidoyl-L-glutamate to L-glutamate and formamide. The protein is Formimidoylglutamase of Streptococcus gordonii (strain Challis / ATCC 35105 / BCRC 15272 / CH1 / DL1 / V288).